A 180-amino-acid polypeptide reads, in one-letter code: MAEDDMVSLLFKLKVEDVTCSDDPEKHMKNASNERKPLIEPVENQLMDIGEEGGSLDYWLLYLYVDCLTMMCCFHRGSLPYNWMQGALLTNLPSYQHDVTLDEVNRGLKSASDFFGYVDPMRSDYFTAFSFPGRVTKLNEQMELTSTKGRCLKFDLYASTQLRFKPGELVRHGECKFAIG.

Functionally, hydrolyzes cytokinin glucosides thus liberating free cytokinins. This is Cytokinin-beta-glucosidase 1 (ROLC1) from Linaria vulgaris (Toadflax).